The sequence spans 390 residues: Chorismate synthase 1 (390 aa).

Arg-39 and Arg-45 together coordinate NADP(+). Residues 132 to 134, 253 to 254, Gly-298, 313 to 317, and Arg-339 each bind FMN; these read RSS, NA, and KPIPT.

It belongs to the chorismate synthase family. Homotetramer. FMNH2 serves as cofactor.

It carries out the reaction 5-O-(1-carboxyvinyl)-3-phosphoshikimate = chorismate + phosphate. It functions in the pathway metabolic intermediate biosynthesis; chorismate biosynthesis; chorismate from D-erythrose 4-phosphate and phosphoenolpyruvate: step 7/7. Catalyzes the anti-1,4-elimination of the C-3 phosphate and the C-6 proR hydrogen from 5-enolpyruvylshikimate-3-phosphate (EPSP) to yield chorismate, which is the branch point compound that serves as the starting substrate for the three terminal pathways of aromatic amino acid biosynthesis. This reaction introduces a second double bond into the aromatic ring system. In Bacillus anthracis, this protein is Chorismate synthase 1.